An 851-amino-acid polypeptide reads, in one-letter code: Glutathione transporter 1 (851 aa).

The span at 1-14 (MTARNSASIPTSIR) shows a compositional bias: polar residues. Residues 1–116 (MTARNSASIP…LDNETDSEVE (116 aa)) form a disordered region. Asn32 carries N-linked (GlcNAc...) asparagine glycosylation. Low complexity predominate over residues 33–68 (LSTKTASKTSLTFRQSSSDESTSSYSGNHHNINIQH). Over residues 74–92 (FRTNSSSFSPNDYSISESP) the composition is skewed to polar residues. N-linked (GlcNAc...) asparagine glycosylation is present at Asn77. Ser93 is subject to Phosphoserine. Residues 105-134 (VQLDNETDSEVESEVEELERELEAIEDSVY) adopt a coiled-coil conformation. N-linked (GlcNAc...) asparagine glycosylation occurs at Asn109. 2 helical membrane passes run 156-176 (TWVL…FFSL) and 179-199 (PALS…GKLL). Asn256 carries an N-linked (GlcNAc...) asparagine glycan. 4 consecutive transmembrane segments (helical) span residues 259 to 279 (WGYK…FAGL), 282 to 302 (RWIV…TVLF), 333 to 353 (FFAY…FIFK), and 405 to 425 (WVIC…VPIL). Residues Asn452 and Asn464 are each glycosylated (N-linked (GlcNAc...) asparagine). 5 consecutive transmembrane segments (helical) span residues 480 to 500 (YSMS…HCAL), 531 to 551 (APQW…IFTV), 560 to 580 (VWAL…QGVL), 592 to 612 (IITE…NLMI), and 642 to 662 (ILFF…VAVQ). Residue Asn691 is glycosylated (N-linked (GlcNAc...) asparagine). The next 3 helical transmembrane spans lie at 711–731 (YYPL…TWGL), 757–777 (PATG…NYVI), and 791–811 (VLAA…FLCV). Asn843 carries N-linked (GlcNAc...) asparagine glycosylation.

This sequence belongs to the oligopeptide OPT transporter family.

The protein localises to the endoplasmic reticulum membrane. It is found in the cell membrane. Functionally, high-affinity glutathione transporter which plays a role in scavenging glutathione from the extracellular environment for the maintenance of sulfur homeostasis. The polypeptide is Glutathione transporter 1 (pgt1) (Schizosaccharomyces pombe (strain 972 / ATCC 24843) (Fission yeast)).